Here is a 118-residue protein sequence, read N- to C-terminus: Large ribosomal subunit protein uL22c (118 aa).

Belongs to the universal ribosomal protein uL22 family. In terms of assembly, part of the 50S ribosomal subunit.

It localises to the plastid. The protein resides in the chloroplast. This protein binds specifically to 23S rRNA. Its function is as follows. The globular domain of the protein is located near the polypeptide exit tunnel on the outside of the subunit, while an extended beta-hairpin is found that lines the wall of the exit tunnel in the center of the 70S ribosome. The polypeptide is Large ribosomal subunit protein uL22c (rpl22) (Physcomitrium patens (Spreading-leaved earth moss)).